The chain runs to 287 residues: Eukaryotic translation initiation factor 3 subunit F (287 aa).

The 131-residue stretch at 12–142 folds into the MPN domain; the sequence is VRVHPVVLFQ…IKAYVCVSLG (131 aa).

Belongs to the eIF-3 subunit F family. As to quaternary structure, component of the eukaryotic translation initiation factor 3 (eIF-3) complex.

It is found in the cytoplasm. Functionally, component of the eukaryotic translation initiation factor 3 (eIF-3) complex, which is involved in protein synthesis of a specialized repertoire of mRNAs and, together with other initiation factors, stimulates binding of mRNA and methionyl-tRNAi to the 40S ribosome. The eIF-3 complex specifically targets and initiates translation of a subset of mRNAs involved in cell proliferation. This is Eukaryotic translation initiation factor 3 subunit F from Aedes aegypti (Yellowfever mosquito).